Here is a 399-residue protein sequence, read N- to C-terminus: Fructose-bisphosphate aldolase 1, chloroplastic (399 aa).

The N-terminal 48 residues, 1–48, are a transit peptide targeting the chloroplast; that stretch reads MASSTATMLKASPVKSDWVKGQSLLLRQPSSVSAIRSHVAPSALTVRA. Arginine 96 lines the substrate pocket. Position 158 is a phosphoserine (serine 158). Substrate is bound at residue lysine 186. Serine 216 carries the post-translational modification Phosphoserine. Glutamate 226 serves as the catalytic Proton acceptor. The active-site Schiff-base intermediate with dihydroxyacetone-P is the lysine 268. 310-312 contacts substrate; sequence SGG. An N6,N6,N6-trimethyllysine modification is found at lysine 395.

This sequence belongs to the class I fructose-bisphosphate aldolase family. As to quaternary structure, homotetramer. Post-translationally, can be trimethylated at Lys-395 by LSMT-L, but the trimethylation has no effect in vitro on the kinetic properties of the enzyme. S-glutathionylated. As to expression, highly expressed in rosettes leaves and cauline leaves.

The protein localises to the plastid. It localises to the chloroplast. The protein resides in the plastoglobule. It is found in the chloroplast stroma. It carries out the reaction beta-D-fructose 1,6-bisphosphate = D-glyceraldehyde 3-phosphate + dihydroxyacetone phosphate. It participates in carbohydrate degradation; glycolysis; D-glyceraldehyde 3-phosphate and glycerone phosphate from D-glucose: step 4/4. In terms of biological role, plays a key role in glycolysis and gluconeogenesis. This Arabidopsis thaliana (Mouse-ear cress) protein is Fructose-bisphosphate aldolase 1, chloroplastic.